A 66-amino-acid chain; its full sequence is Toxin Aah6 (66 aa).

Residues 2 to 65 (RDGYVVKNGT…LYGDDGTYCS (64 aa)) enclose the LCN-type CS-alpha/beta domain. Residue asparagine 9 is glycosylated (N-linked (GlcNAc...) asparagine). 4 disulfides stabilise this stretch: cysteine 13–cysteine 64, cysteine 17–cysteine 40, cysteine 26–cysteine 45, and cysteine 30–cysteine 47.

The protein belongs to the long (4 C-C) scorpion toxin superfamily. Sodium channel inhibitor family. Beta subfamily. Post-translationally, N-glycans are core-fucosylated, heterogeneous and short which could be the result of extensive trimming. In terms of tissue distribution, expressed by the venom gland.

The protein resides in the secreted. Functionally, beta toxins bind voltage-independently at site-4 of sodium channels and shift the voltage of activation toward more negative potentials thereby affecting sodium channel activation and promoting spontaneous and repetitive firing. This toxin is active only on insects. This toxin has very low anti-insect activity. This is Toxin Aah6 from Androctonus australis (Sahara scorpion).